Reading from the N-terminus, the 248-residue chain is Probable transcriptional regulatory protein Pfl01_4410 (248 aa).

The protein belongs to the TACO1 family.

The protein resides in the cytoplasm. This is Probable transcriptional regulatory protein Pfl01_4410 from Pseudomonas fluorescens (strain Pf0-1).